The primary structure comprises 302 residues: Recombination-associated protein RdgC (302 aa).

It belongs to the RdgC family.

The protein resides in the cytoplasm. It localises to the nucleoid. In terms of biological role, may be involved in recombination. The polypeptide is Recombination-associated protein RdgC (Xanthomonas campestris pv. campestris (strain 8004)).